Consider the following 318-residue polypeptide: MAVAYEGQLTGHRGWVTSLACPQTPETATKVVSTSRDKTLLSWGPNPDRHSSECSYGLPDRRLEGHSAFVSDVALSNNGNFAVSASWDHSLRLWNLQNGQCQYKFLGHTKDVLSVAFSPDNRQIVSGGRDNALRVWNVKGECMHTLSRGAHTDWVSCVRFSPSLDAPVIVSGGWDNLVKVWDLATGRLVTDLKGHTNYVTSVTVSPDGSLCASSDKDGVARLWDLTKGEALSEMAAGAPINQICFSPNRYWMCAATEKGIRIFDLENKDIIVELAPEHQGSKKIVPECVSIAWSADGSTLYSGYTDNVIRVWGVSENA.

WD repeat units lie at residues 11–44 (GHRGWVTSLACPQTPETATKVVSTSRDKTLLSWG), 65–95 (GHSAFVSDVALSNNGNFAVSASWDHSLRLWN), 107–137 (GHTKDVLSVAFSPDNRQIVSGGRDNALRVWN), 150–182 (AHTDWVSCVRFSPSLDAPVIVSGGWDNLVKVWD), 194–224 (GHTNYVTSVTVSPDGSLCASSDKDGVARLWD), 235–264 (AAGAPINQICFSPNRYWMCAATEKGIRIFD), and 282–315 (KKIVPECVSIAWSADGSTLYSGYTDNVIRVWGVS).

Belongs to the WD repeat G protein beta family. Ribosomal protein RACK1 subfamily.

The protein is Small ribosomal subunit protein RACK1 of Trypanosoma brucei brucei.